Consider the following 158-residue polypeptide: Antitoxin TacA (158 aa).

The protein belongs to the TacA antitoxin family. As to quaternary structure, forms a complex with cognate toxin TacT.

In terms of biological role, antitoxin component of a type II toxin-antitoxin (TA) system. Counteracts the toxic effect of cognate toxin TacT. Functionally, tacA-TacT both represses and derepresses expression of its own operon. This is Antitoxin TacA from Mycobacterium tuberculosis (strain ATCC 25618 / H37Rv).